A 29-amino-acid chain; its full sequence is Cyclotide mra2 (29 aa).

3 disulfide bridges follow: Cys4/Cys19, Cys8/Cys21, and Cys13/Cys26.

This is a cyclic peptide. In terms of processing, contains 3 disulfide bonds.

In terms of biological role, probably participates in a plant defense mechanism. In Melicytus ramiflorus (Whitey wood), this protein is Cyclotide mra2.